Consider the following 337-residue polypeptide: Anthranilate phosphoribosyltransferase (337 aa).

Residues G80, 83–84 (GD), T88, 90–93 (NIST), 108–116 (KHGNRAVSS), and S120 contribute to the 5-phospho-alpha-D-ribose 1-diphosphate site. G80 contacts anthranilate. Position 92 (S92) interacts with Mg(2+). N111 contributes to the anthranilate binding site. Position 166 (R166) interacts with anthranilate. Residues D224 and E225 each contribute to the Mg(2+) site.

It belongs to the anthranilate phosphoribosyltransferase family. As to quaternary structure, homodimer. The cofactor is Mg(2+).

It catalyses the reaction N-(5-phospho-beta-D-ribosyl)anthranilate + diphosphate = 5-phospho-alpha-D-ribose 1-diphosphate + anthranilate. It participates in amino-acid biosynthesis; L-tryptophan biosynthesis; L-tryptophan from chorismate: step 2/5. Catalyzes the transfer of the phosphoribosyl group of 5-phosphorylribose-1-pyrophosphate (PRPP) to anthranilate to yield N-(5'-phosphoribosyl)-anthranilate (PRA). This chain is Anthranilate phosphoribosyltransferase, found in Anaeromyxobacter dehalogenans (strain 2CP-C).